A 103-amino-acid polypeptide reads, in one-letter code: Large ribosomal subunit protein bL21 (103 aa).

This sequence belongs to the bacterial ribosomal protein bL21 family. As to quaternary structure, part of the 50S ribosomal subunit. Contacts protein L20.

In terms of biological role, this protein binds to 23S rRNA in the presence of protein L20. The sequence is that of Large ribosomal subunit protein bL21 from Enterobacter sp. (strain 638).